The sequence spans 161 residues: Lipoprotein signal peptidase (161 aa).

4 consecutive transmembrane segments (helical) span residues 8–28, 40–60, 67–87, and 91–111; these read LKYFILAILIIAADLYTKYLA, ITSFFNLTLLYNHGAAFSLLS, QMIMFSTISLIAAIVLIYLII, and ITEKINLFSFALILGGALGNF. Catalysis depends on residues D122 and D140. The chain crosses the membrane as a helical span at residues 136 to 156; the sequence is FNIADSAITCGVVILIAASLF.

It belongs to the peptidase A8 family.

It is found in the cell inner membrane. The catalysed reaction is Release of signal peptides from bacterial membrane prolipoproteins. Hydrolyzes -Xaa-Yaa-Zaa-|-(S,diacylglyceryl)Cys-, in which Xaa is hydrophobic (preferably Leu), and Yaa (Ala or Ser) and Zaa (Gly or Ala) have small, neutral side chains.. Its pathway is protein modification; lipoprotein biosynthesis (signal peptide cleavage). Functionally, this protein specifically catalyzes the removal of signal peptides from prolipoproteins. The protein is Lipoprotein signal peptidase of Francisella tularensis subsp. novicida (strain U112).